The sequence spans 184 residues: Ribosome-recycling factor (184 aa).

The tract at residues 141–165 (DEKNGDITEDDLRSQTDDVQKATDN) is disordered.

The protein belongs to the RRF family.

It is found in the cytoplasm. In terms of biological role, responsible for the release of ribosomes from messenger RNA at the termination of protein biosynthesis. May increase the efficiency of translation by recycling ribosomes from one round of translation to another. The chain is Ribosome-recycling factor from Staphylococcus epidermidis (strain ATCC 35984 / DSM 28319 / BCRC 17069 / CCUG 31568 / BM 3577 / RP62A).